A 318-amino-acid chain; its full sequence is Ribose-phosphate pyrophosphokinase 2 (318 aa).

96–101 (RQDKKD) serves as a coordination point for ATP. Aspartate 128, histidine 130, aspartate 139, and aspartate 143 together coordinate Mg(2+). An ATP-binding site is contributed by histidine 130. A binding of phosphoribosylpyrophosphate region spans residues 212-227 (KDRVAILVDDMADTCG).

This sequence belongs to the ribose-phosphate pyrophosphokinase family. As to quaternary structure, homodimer. The active form is probably a hexamer composed of 3 homodimers. Mg(2+) is required as a cofactor.

The catalysed reaction is D-ribose 5-phosphate + ATP = 5-phospho-alpha-D-ribose 1-diphosphate + AMP + H(+). It functions in the pathway metabolic intermediate biosynthesis; 5-phospho-alpha-D-ribose 1-diphosphate biosynthesis; 5-phospho-alpha-D-ribose 1-diphosphate from D-ribose 5-phosphate (route I): step 1/1. With respect to regulation, activated by magnesium and inorganic phosphate. Competitively or non-competitively inhibited by ADP, 2,3-bisphosphoglyceride or GDP. Functionally, catalyzes the synthesis of phosphoribosylpyrophosphate (PRPP) that is essential for nucleotide synthesis. This chain is Ribose-phosphate pyrophosphokinase 2 (prps2), found in Xenopus laevis (African clawed frog).